The chain runs to 512 residues: Sodium/proline symporter (512 aa).

Helical transmembrane passes span 16-36 (WQTYIMIAVYFLILIVIGFYG), 54-74 (IGPYITALSAGASDMSGWMIM), 85-105 (LSAMWITIGLTLGAYINYFVV), 139-159 (IISGLIIVVFFTLYTHSGFVS), 174-194 (FGLILVAFIVIFYTFFGGYLA), 200-220 (FFQGVIMLIAMVMVPIVAMMN), 247-267 (IGIISLFSWGLGYFGQPHIII), 286-306 (ISWMAVGLLGAVAVGLTGIAF), 327-347 (VLFHPLVGGFLLAAILAAIMS), 381-401 (FVMIGRLSVLVVAIVAIAIAW), 410-430 (LVGNAWAGFGASFSPLVLFAL), 438-458 (AGAVSGMVSGALVVIVWIAWI), and 467-487 (IFGLYEIIPGFIVSVIVTYVV).

This sequence belongs to the sodium:solute symporter (SSF) (TC 2.A.21) family.

The protein resides in the cell membrane. It catalyses the reaction L-proline(in) + Na(+)(in) = L-proline(out) + Na(+)(out). Its function is as follows. Catalyzes the sodium-dependent uptake of extracellular L-proline. Since most S.aureus strains are L-proline auxotrophs, this transporter may aid the bacterial persistence during an infection of tissues with low proline concentrations. This chain is Sodium/proline symporter (putP), found in Staphylococcus aureus (strain USA300).